Reading from the N-terminus, the 75-residue chain is Small ribosomal subunit protein bS18 (75 aa).

The protein belongs to the bacterial ribosomal protein bS18 family. As to quaternary structure, part of the 30S ribosomal subunit. Forms a tight heterodimer with protein bS6.

Functionally, binds as a heterodimer with protein bS6 to the central domain of the 16S rRNA, where it helps stabilize the platform of the 30S subunit. The sequence is that of Small ribosomal subunit protein bS18 from Acinetobacter baumannii (strain AB307-0294).